Here is a 361-residue protein sequence, read N- to C-terminus: Chorismate synthase (361 aa).

NADP(+) contacts are provided by arginine 48 and arginine 54. FMN is bound by residues 125–127 (RSS), 238–239 (NA), glycine 278, 293–297 (KPTSS), and arginine 319.

Belongs to the chorismate synthase family. As to quaternary structure, homotetramer. It depends on FMNH2 as a cofactor.

It carries out the reaction 5-O-(1-carboxyvinyl)-3-phosphoshikimate = chorismate + phosphate. The protein operates within metabolic intermediate biosynthesis; chorismate biosynthesis; chorismate from D-erythrose 4-phosphate and phosphoenolpyruvate: step 7/7. Catalyzes the anti-1,4-elimination of the C-3 phosphate and the C-6 proR hydrogen from 5-enolpyruvylshikimate-3-phosphate (EPSP) to yield chorismate, which is the branch point compound that serves as the starting substrate for the three terminal pathways of aromatic amino acid biosynthesis. This reaction introduces a second double bond into the aromatic ring system. This is Chorismate synthase from Shigella flexneri.